Here is a 273-residue protein sequence, read N- to C-terminus: NADPH-dependent 7-cyano-7-deazaguanine reductase (273 aa).

A substrate-binding site is contributed by 80–82 (VES). 82–83 (SK) is an NADPH binding site. The active-site Thioimide intermediate is cysteine 180. The active-site Proton donor is aspartate 187. 219-220 (HE) provides a ligand contact to substrate. Position 248-249 (248-249 (RG)) interacts with NADPH.

Belongs to the GTP cyclohydrolase I family. QueF type 2 subfamily. In terms of assembly, homodimer.

It localises to the cytoplasm. It carries out the reaction 7-aminomethyl-7-carbaguanine + 2 NADP(+) = 7-cyano-7-deazaguanine + 2 NADPH + 3 H(+). Its pathway is tRNA modification; tRNA-queuosine biosynthesis. Functionally, catalyzes the NADPH-dependent reduction of 7-cyano-7-deazaguanine (preQ0) to 7-aminomethyl-7-deazaguanine (preQ1). The sequence is that of NADPH-dependent 7-cyano-7-deazaguanine reductase from Bordetella parapertussis (strain 12822 / ATCC BAA-587 / NCTC 13253).